A 309-amino-acid chain; its full sequence is Glutaminase (309 aa).

Residues serine 65, asparagine 117, glutamate 162, asparagine 169, tyrosine 193, tyrosine 245, and valine 263 each coordinate substrate.

Belongs to the glutaminase family. In terms of assembly, homotetramer.

It catalyses the reaction L-glutamine + H2O = L-glutamate + NH4(+). This Clostridioides difficile (strain 630) (Peptoclostridium difficile) protein is Glutaminase.